Here is a 201-residue protein sequence, read N- to C-terminus: 3-isopropylmalate dehydratase small subunit (201 aa).

Belongs to the LeuD family. LeuD type 1 subfamily. In terms of assembly, heterodimer of LeuC and LeuD.

It carries out the reaction (2R,3S)-3-isopropylmalate = (2S)-2-isopropylmalate. It participates in amino-acid biosynthesis; L-leucine biosynthesis; L-leucine from 3-methyl-2-oxobutanoate: step 2/4. Its function is as follows. Catalyzes the isomerization between 2-isopropylmalate and 3-isopropylmalate, via the formation of 2-isopropylmaleate. In Escherichia coli O9:H4 (strain HS), this protein is 3-isopropylmalate dehydratase small subunit.